Reading from the N-terminus, the 475-residue chain is Ribulose bisphosphate carboxylase large chain (475 aa).

Positions 1–2 (MS) are excised as a propeptide. Proline 3 carries the post-translational modification N-acetylproline. Lysine 14 carries the post-translational modification N6,N6,N6-trimethyllysine. Residues asparagine 123 and threonine 173 each contribute to the substrate site. Catalysis depends on lysine 175, which acts as the Proton acceptor. Lysine 177 serves as a coordination point for substrate. Mg(2+)-binding residues include lysine 201, aspartate 203, and glutamate 204. Lysine 201 is subject to N6-carboxylysine. Residue histidine 294 is the Proton acceptor of the active site. 3 residues coordinate substrate: arginine 295, histidine 327, and serine 379.

The protein belongs to the RuBisCO large chain family. Type I subfamily. Heterohexadecamer of 8 large chains and 8 small chains; disulfide-linked. The disulfide link is formed within the large subunit homodimers. Mg(2+) serves as cofactor. In terms of processing, the disulfide bond which can form in the large chain dimeric partners within the hexadecamer appears to be associated with oxidative stress and protein turnover.

Its subcellular location is the plastid. The protein resides in the chloroplast. The enzyme catalyses 2 (2R)-3-phosphoglycerate + 2 H(+) = D-ribulose 1,5-bisphosphate + CO2 + H2O. The catalysed reaction is D-ribulose 1,5-bisphosphate + O2 = 2-phosphoglycolate + (2R)-3-phosphoglycerate + 2 H(+). Functionally, ruBisCO catalyzes two reactions: the carboxylation of D-ribulose 1,5-bisphosphate, the primary event in carbon dioxide fixation, as well as the oxidative fragmentation of the pentose substrate in the photorespiration process. Both reactions occur simultaneously and in competition at the same active site. In Betula papyrifera (Paper birch), this protein is Ribulose bisphosphate carboxylase large chain.